Reading from the N-terminus, the 434-residue chain is CCA tRNA nucleotidyltransferase 1, mitochondrial (434 aa).

Residues 1–41 (MQSVLYPWHRQVLRCSWSRLCLLKRYLFTMKLQSPEFQSLF) constitute a mitochondrion transit peptide. Residues glycine 64 and arginine 67 each contribute to the ATP site. The CTP site is built by glycine 64 and arginine 67. 2 residues coordinate Mg(2+): aspartate 77 and aspartate 79. Residues arginine 151, aspartate 194, arginine 197, arginine 200, and arginine 203 each contribute to the ATP site. Positions 151, 194, 197, 200, and 203 each coordinate CTP. Serine 400 bears the Phosphoserine mark. At lysine 402 the chain carries N6-acetyllysine.

Belongs to the tRNA nucleotidyltransferase/poly(A) polymerase family. Monomer, and homodimer. The cofactor is Mg(2+).

Its subcellular location is the mitochondrion. The protein resides in the cytoplasm. The protein localises to the nucleus. The catalysed reaction is a tRNA precursor + 2 CTP + ATP = a tRNA with a 3' CCA end + 3 diphosphate. The enzyme catalyses a tRNA with a 3' CCA end + 2 CTP + ATP = a tRNA with a 3' CCACCA end + 3 diphosphate. In terms of biological role, nucleotidyltransferase that catalyzes the addition and repair of the essential 3'-terminal CCA sequence in tRNAs, which is necessary for the attachment of amino acids to the 3' terminus of tRNA molecules, using CTP and ATP as substrates. tRNA 3'-terminal CCA addition is required both for tRNA processing and repair. Promotes tRNA repair and recycling downstream of the ribosome-associated quality control (RQC) pathway by mediating addition of the tRNA 3'-terminal CCA following cleavage by ANKZF1 and repair by ELAC1. Also involved in tRNA surveillance by mediating tandem CCA addition to generate a CCACCA at the 3' terminus of unstable tRNAs and tRNA-like transcripts. While stable tRNAs receive only 3'-terminal CCA, unstable tRNAs beginning with GG are marked with CCACCA and rapidly degraded. The structural flexibility of RNA controls the choice between CCA versus CCACCA addition: following the first CCA addition cycle, nucleotide-binding to the active site triggers a clockwise screw motion, producing torque on the RNA. This ejects stable RNAs, whereas unstable RNAs are refolded while bound to the enzyme and subjected to a second CCA catalytic cycle. In Mus musculus (Mouse), this protein is CCA tRNA nucleotidyltransferase 1, mitochondrial (Trnt1).